The sequence spans 127 residues: Large ribosomal subunit protein bL12 (127 aa).

Belongs to the bacterial ribosomal protein bL12 family. Homodimer. Part of the ribosomal stalk of the 50S ribosomal subunit. Forms a multimeric L10(L12)X complex, where L10 forms an elongated spine to which 2 to 4 L12 dimers bind in a sequential fashion. Binds GTP-bound translation factors.

In terms of biological role, forms part of the ribosomal stalk which helps the ribosome interact with GTP-bound translation factors. Is thus essential for accurate translation. The chain is Large ribosomal subunit protein bL12 from Chloroherpeton thalassium (strain ATCC 35110 / GB-78).